The following is a 317-amino-acid chain: Methyltransferase CPUR_05424 (317 aa).

The segment at 57–149 is methyltransferase domain; that stretch reads DVGAGNGPYA…QLRPGGTFAC (93 aa).

It belongs to the methyltransferase superfamily.

Its pathway is pigment biosynthesis. Functionally, methyltransferase; part of the ergochrome gene cluster responsible for the typical purple-black color of the ergot sclerotia. The ergochrome gene cluster produces several ergot pigments including the yellow ergochrome secalonic acid and its derivatives, as well as the red anthraquinones endocrocin and clavorubin. The pathway begins with the synthesis of atrochrysone thioester by the polyketide synthase (PKS) CPUR_05437. The atrochrysone carboxyl ACP thioesterase CPUR_05436 then breaks the thioester bond and releases the atrochrysone carboxylic acid from CPUR_05437. The atrochrysone carboxylic acid is then converted to atrochrysone which is further transformed into emodin anthrone. The next step is performed by the anthrone oxygenase CPUR_05434 that catalyzes the oxidation of emodinanthrone to emodin. Emodin is further modified to yield monodictyphenone via several steps involving CPUR_05427, CPUR_05428, CPUR_05429 and CPUR_05430. The short chain dehydrogenase/reductase CPUR_05418 then catalyzes the C-5 ketoreduction to give the xanthone skeleton of the monomeric units. Ergochromes formation requires further dimerization steps of different xanthone units, probably catalyzed by the cytochrome P450 monooxygenase CPUR_05419. CPUR_05425, CPUR_05426 and CPUR_05431 are unique to Claviceps, thus it is likely that they are involved in further modification of xanthone units or in their dimerization. The yellow ergochromes and the red anthraquinone pigments endocrocin and clavorubin are products from the same PKS derived precursors and the latter are likely shunt products in the pathway of xanthone biosynthesis. It is proposed that atrochrysone carboxylic acid released from the PKS CPUR_05437 can also be converted to endocrocin anthrone which is further oxidized into endocrocin by CPUR_05435. Endocrocin could be then modified to clavorubin, possibly by CPUR_05423 and CPUR_05431. Clavorubin is the principal anthraquinone metabolite produced by the cluster with a much higher yield compared to endocrocin. In Claviceps purpurea (strain 20.1) (Ergot fungus), this protein is Methyltransferase CPUR_05424.